A 657-amino-acid chain; its full sequence is Glycogen debranching enzyme (657 aa).

The active-site Nucleophile is Asp-336. The active-site Proton donor is Glu-371. Residues Ala-460–Lys-479 are disordered.

The protein belongs to the glycosyl hydrolase 13 family.

The catalysed reaction is Hydrolysis of (1-&gt;6)-alpha-D-glucosidic linkages to branches with degrees of polymerization of three or four glucose residues in limit dextrin.. Its pathway is glycan degradation; glycogen degradation. Functionally, removes maltotriose and maltotetraose chains that are attached by 1,6-alpha-linkage to the limit dextrin main chain, generating a debranched limit dextrin. This chain is Glycogen debranching enzyme, found in Escherichia coli (strain SMS-3-5 / SECEC).